The chain runs to 595 residues: DNA damage-binding protein CMR1 (595 aa).

The segment at 20–79 is disordered; it reads ALLDSLGLDPAGASSPFGSSPAPTSNKTKPKPKPAPKKRKAAAVIAVDEGPRRRSGRIAG. Residues 29-46 show a composition bias toward low complexity; the sequence is PAGASSPFGSSPAPTSNK. Basic residues predominate over residues 47-60; the sequence is TKPKPKPAPKKRKA. WD repeat units lie at residues 185–226, 255–297, 300–339, and 349–389; these read VTNE…MEKP, HAKN…ELFS, DEDLLINHFDLLPSAQEAWMVDKNGGISHWDTRESKRESG, and GRGA…SISS. The interval 397-429 is disordered; the sequence is AIEEEEEGTSTLSGQSSSLPHDTHPTRESDYST. A compositionally biased stretch (low complexity) spans 405–415; it reads TSTLSGQSSSL. The segment covering 417 to 426 has biased composition (basic and acidic residues); that stretch reads HDTHPTRESD. WD repeat units follow at residues 448 to 487, 519 to 556, and 558 to 595; these read QHGKSCSSAYWDPWGRRILTTSYDDHLRVFNIDPGSSLVD, LRAQWSLNMEYMPHFTVGNMKRTLDVVSATGEKIVGLW, and DDVTAVPTVTASHPNIVDRVVGGNTSGRIQLWSSGDHI.

The protein belongs to the WD repeat DDB2/WDR76 family.

DNA-binding protein that binds to both single- and double-stranded DNA. Binds preferentially to UV-damaged DNA. May be involved in DNA-metabolic processes. The chain is DNA damage-binding protein CMR1 from Cryptococcus neoformans var. neoformans serotype D (strain B-3501A) (Filobasidiella neoformans).